The chain runs to 678 residues: Penicillin-binding protein activator LpoA (678 aa).

The first 26 residues, 1–26 (MVPSTFSRLKAARCLPVVLAALIFAG), serve as a signal peptide directing secretion. C27 carries the N-palmitoyl cysteine lipid modification. A lipid anchor (S-diacylglycerol cysteine) is attached at C27. Disordered regions lie at residues 304-338 (AEQP…SVPV) and 495-530 (IALT…QFTN). Over residues 513-529 (TTNNPTLQTTPTDDQFT) the composition is skewed to low complexity.

It belongs to the LpoA family. As to quaternary structure, interacts with PBP1a.

The protein resides in the cell outer membrane. Functionally, regulator of peptidoglycan synthesis that is essential for the function of penicillin-binding protein 1A (PBP1a). The chain is Penicillin-binding protein activator LpoA from Escherichia coli O6:H1 (strain CFT073 / ATCC 700928 / UPEC).